A 287-amino-acid chain; its full sequence is 4-hydroxybenzoate octaprenyltransferase (287 aa).

Helical transmembrane passes span 20–38, 95–115, 211–231, 235–255, and 266–286; these read IGTL…FAAG, IVFL…NPLV, IIAA…LIAE, IYGG…KLIF, and FLNN…DYLV.

It belongs to the UbiA prenyltransferase family. Mg(2+) serves as cofactor.

The protein resides in the cell inner membrane. The catalysed reaction is all-trans-octaprenyl diphosphate + 4-hydroxybenzoate = 4-hydroxy-3-(all-trans-octaprenyl)benzoate + diphosphate. It participates in cofactor biosynthesis; ubiquinone biosynthesis. In terms of biological role, catalyzes the prenylation of para-hydroxybenzoate (PHB) with an all-trans polyprenyl group. Mediates the second step in the final reaction sequence of ubiquinone-8 (UQ-8) biosynthesis, which is the condensation of the polyisoprenoid side chain with PHB, generating the first membrane-bound Q intermediate 3-octaprenyl-4-hydroxybenzoate. In Shewanella piezotolerans (strain WP3 / JCM 13877), this protein is 4-hydroxybenzoate octaprenyltransferase.